Reading from the N-terminus, the 209-residue chain is Thymidine kinase (209 aa).

ATP is bound by residues 25-32 (GCMFAGKT) and 103-106 (DEVQ). The Proton acceptor role is filled by glutamate 104. The Zn(2+) site is built by cysteine 160, cysteine 163, cysteine 198, and cysteine 201.

It belongs to the thymidine kinase family. In terms of assembly, homotetramer.

The protein resides in the cytoplasm. The enzyme catalyses thymidine + ATP = dTMP + ADP + H(+). This chain is Thymidine kinase, found in Mycoplasma mycoides subsp. mycoides SC (strain CCUG 32753 / NCTC 10114 / PG1).